We begin with the raw amino-acid sequence, 120 residues long: Late cornified envelope-like proline-rich protein 1 (120 aa).

The protein belongs to the cornifin (SPRR) family.

The polypeptide is Late cornified envelope-like proline-rich protein 1 (Lelp1) (Mus musculus (Mouse)).